Here is a 169-residue protein sequence, read N- to C-terminus: NADH-quinone oxidoreductase subunit I (169 aa).

2 consecutive 4Fe-4S ferredoxin-type domains span residues 60 to 90 (LRRY…IEAE) and 100 to 129 (TRYD…EGPN). 8 residues coordinate [4Fe-4S] cluster: Cys-70, Cys-73, Cys-76, Cys-80, Cys-109, Cys-112, Cys-115, and Cys-119.

This sequence belongs to the complex I 23 kDa subunit family. As to quaternary structure, NDH-1 is composed of 14 different subunits. Subunits NuoA, H, J, K, L, M, N constitute the membrane sector of the complex. Requires [4Fe-4S] cluster as cofactor.

It is found in the cell membrane. The catalysed reaction is a quinone + NADH + 5 H(+)(in) = a quinol + NAD(+) + 4 H(+)(out). Its function is as follows. NDH-1 shuttles electrons from NADH, via FMN and iron-sulfur (Fe-S) centers, to quinones in the respiratory chain. The immediate electron acceptor for the enzyme in this species is believed to be ubiquinone. Couples the redox reaction to proton translocation (for every two electrons transferred, four hydrogen ions are translocated across the cytoplasmic membrane), and thus conserves the redox energy in a proton gradient. This is NADH-quinone oxidoreductase subunit I from Wolbachia pipientis wMel.